The chain runs to 744 residues: MLFPPLRSLFLFTLLLSSVCFLQIKADHDDESDLGSDIKVDKRLKFENPKLRQAYIALQSWKKAIFSDPFNFTANWNGSDVCSYNGIYCAPSPSYPKTRVVAGIDLNHADMAGYLASELGLLSDLALFHINSNRFCGEVPLTFNRMKLLYELDLSNNRFVGKFPKVVLSLPSLKFLDLRYNEFEGKIPSKLFDRELDAIFLNHNRFRFGIPKNMGNSPVSALVLADNNLGGCIPGSIGQMGKTLNELILSNDNLTGCLPPQIGNLKKVTVFDITSNRLQGPLPSSVGNMKSLEELHVANNAFTGVIPPSICQLSNLENFTYSSNYFSGRPPICAASLLADIVVNGTMNCITGLARQRSDKQCSSLLARPVDCSKFGCYNIFSPPPPTFKMSPEVRTLPPPIYVYSSPPPPPSSKMSPTVRAYSPPPPPSSKMSPSVRAYSPPPPPYSKMSPSVRAYPPPPPPSPSPPPPYVYSSPPPPYVYSSPPPPPYVYSSPPPPPYVYSSPPPPYVYSSPPPPYVYSSPPPPPPSPPPPCPESSPPPPVVYYAPVTQSPPPPSPVYYPPVTQSPPPPSPVYYPPVTNSPPPPSPVYYPPVTYSPPPPSPVYYPQVTPSPPPPSPLYYPPVTPSPPPPSPVYYPPVTPSPPPPSPVYYPPVTPSPPPPSPVYYPSETQSPPPPTEYYYSPSQSPPPTKACKEGHPPQATPSYEPPPEYSYSSSPPPPSPTSYFPPMPSVSYDASPPPPPSYY.

An N-terminal signal peptide occupies residues M1 to A26. N-linked (GlcNAc...) asparagine glycans are attached at residues N71 and N77. LRR repeat units follow at residues L122 to R145, K147 to L170, P171 to R194, L196 to S217, V219 to M240, G241 to L265, K266 to M289, K290 to L313, and N315 to S336. N-linked (GlcNAc...) asparagine glycosylation is present at N253. 2 N-linked (GlcNAc...) asparagine glycosylation sites follow: N318 and N344. One copy of the LRR 10 repeat lies at F381–Y404. The contains the Ser-Pro(4) repeats stretch occupies residues S382–Y744. Disordered regions lie at residues P408–P445, V518–S537, P555–P576, and P658–Y744. Residues S430–Y439 show a composition bias toward low complexity. Positions Y704 to P729 are enriched in pro residues.

Hydroxylated on proline residues in the S-P-P-P-P repeat. In terms of processing, O-glycosylated on hydroxyprolines. Expressed in root hair cells (at protein level).

It is found in the secreted. It localises to the cell wall. Modulates cell morphogenesis by regulating cell wall formation and assembly, and/or growth polarization. Together with LRX2, component of the extracellular mechanism regulating root hair morphogenesis and elongation. In Arabidopsis thaliana (Mouse-ear cress), this protein is Leucine-rich repeat extensin-like protein 1 (LRX1).